Reading from the N-terminus, the 283-residue chain is Bifunctional protein FolD (283 aa).

NADP(+) contacts are provided by residues 164 to 166, Ser189, and Ile230; that span reads GRS.

Belongs to the tetrahydrofolate dehydrogenase/cyclohydrolase family. As to quaternary structure, homodimer.

It catalyses the reaction (6R)-5,10-methylene-5,6,7,8-tetrahydrofolate + NADP(+) = (6R)-5,10-methenyltetrahydrofolate + NADPH. The catalysed reaction is (6R)-5,10-methenyltetrahydrofolate + H2O = (6R)-10-formyltetrahydrofolate + H(+). The protein operates within one-carbon metabolism; tetrahydrofolate interconversion. Functionally, catalyzes the oxidation of 5,10-methylenetetrahydrofolate to 5,10-methenyltetrahydrofolate and then the hydrolysis of 5,10-methenyltetrahydrofolate to 10-formyltetrahydrofolate. The protein is Bifunctional protein FolD of Lacticaseibacillus casei (strain BL23) (Lactobacillus casei).